The sequence spans 91 residues: Phosphocarrier protein NPr (91 aa).

The 88-residue stretch at 3-90 folds into the HPr domain; sequence KLERQVTICN…ALVDAKFDEA (88 aa). Residue His17 is the Pros-phosphohistidine intermediate of the active site.

The protein belongs to the HPr family.

The protein localises to the cytoplasm. Component of the phosphoenolpyruvate-dependent nitrogen-metabolic phosphotransferase system (nitrogen-metabolic PTS), that seems to be involved in regulating nitrogen metabolism. The phosphoryl group from phosphoenolpyruvate (PEP) is transferred to the phosphoryl carrier protein NPr by enzyme I-Ntr. Phospho-NPr then transfers it to EIIA-Ntr. Could function in the transcriptional regulation of sigma-54 dependent operons in conjunction with the NPr (PtsO) and EIIA-Ntr (PtsN) proteins. This chain is Phosphocarrier protein NPr (ptsO), found in Shewanella violacea (strain JCM 10179 / CIP 106290 / LMG 19151 / DSS12).